The sequence spans 156 residues: Endoribonuclease YbeY (156 aa).

Zn(2+) contacts are provided by H117, H121, and H127.

The protein belongs to the endoribonuclease YbeY family. Zn(2+) serves as cofactor.

The protein localises to the cytoplasm. Its function is as follows. Single strand-specific metallo-endoribonuclease involved in late-stage 70S ribosome quality control and in maturation of the 3' terminus of the 16S rRNA. The protein is Endoribonuclease YbeY of Herminiimonas arsenicoxydans.